The following is a 510-amino-acid chain: NAD(P)H-quinone oxidoreductase subunit 2 B, chloroplastic (510 aa).

13 helical membrane-spanning segments follow: residues 24–44 (LLLF…GLIL), 57–77 (IPWF…ALLF), 99–119 (IFQF…VEYI), 124–144 (MAIT…MFLC), 149–169 (LITI…LSGY), 183–203 (YLLM…WLYG), 227–247 (PGIL…LSLA), 295–315 (WHLL…LIAI), 323–343 (MLAY…IVGD), 354–374 (YMLF…LFGL), 395–415 (ALSL…AGFF), 428–448 (GLYF…YYYL), and 484–504 (MIVC…IIAI).

Belongs to the complex I subunit 2 family. NDH is composed of at least 16 different subunits, 5 of which are encoded in the nucleus.

The protein localises to the plastid. Its subcellular location is the chloroplast thylakoid membrane. The catalysed reaction is a plastoquinone + NADH + (n+1) H(+)(in) = a plastoquinol + NAD(+) + n H(+)(out). The enzyme catalyses a plastoquinone + NADPH + (n+1) H(+)(in) = a plastoquinol + NADP(+) + n H(+)(out). In terms of biological role, NDH shuttles electrons from NAD(P)H:plastoquinone, via FMN and iron-sulfur (Fe-S) centers, to quinones in the photosynthetic chain and possibly in a chloroplast respiratory chain. The immediate electron acceptor for the enzyme in this species is believed to be plastoquinone. Couples the redox reaction to proton translocation, and thus conserves the redox energy in a proton gradient. The polypeptide is NAD(P)H-quinone oxidoreductase subunit 2 B, chloroplastic (Eucalyptus globulus subsp. globulus (Tasmanian blue gum)).